The primary structure comprises 44 residues: Large ribosomal subunit protein bL34 (44 aa).

Positions 21-44 (RMDTSGGRRILSARRRKGRKTISA) are disordered. The span at 31–44 (LSARRRKGRKTISA) shows a compositional bias: basic residues.

It belongs to the bacterial ribosomal protein bL34 family.

This chain is Large ribosomal subunit protein bL34, found in Endomicrobium trichonymphae.